The following is a 331-amino-acid chain: D-aspartate oxidase 2 (331 aa).

FAD is bound by residues Asp-35, Lys-36, Ser-43, and Gly-307.

The protein belongs to the DAMOX/DASOX family. FAD is required as a cofactor.

It localises to the cytoplasm. The enzyme catalyses D-aspartate + O2 + H2O = oxaloacetate + H2O2 + NH4(+). It catalyses the reaction D-glutamate + O2 + H2O = H2O2 + 2-oxoglutarate + NH4(+). Its function is as follows. Selectively catalyzes the oxidative deamination of acidic amino acids. May play a role in the egg-laying events and early development of the worm, in addition to quality control of the germ cells. This is D-aspartate oxidase 2 from Caenorhabditis briggsae.